Reading from the N-terminus, the 154-residue chain is Endoribonuclease YbeY (154 aa).

Zn(2+)-binding residues include His113, His117, and His123.

This sequence belongs to the endoribonuclease YbeY family. Requires Zn(2+) as cofactor.

It is found in the cytoplasm. Its function is as follows. Single strand-specific metallo-endoribonuclease involved in late-stage 70S ribosome quality control and in maturation of the 3' terminus of the 16S rRNA. This chain is Endoribonuclease YbeY, found in Aeromonas salmonicida (strain A449).